Consider the following 339-residue polypeptide: Caspase drICE (339 aa).

A propeptide spanning residues 1–28 (MDATNNGESADQVGIRVGNPEQPNDHTD) is cleaved from the precursor. A disordered region spans residues 1 to 45 (MDATNNGESADQVGIRVGNPEQPNDHTDALGSVGSGGAGSSGLVA). Catalysis depends on residues His169 and Cys211. A propeptide spanning residues 218–230 (GGVTMQRSQTETD) is cleaved from the precursor.

This sequence belongs to the peptidase C14A family. As to quaternary structure, heterotetramer that consists of two anti-parallel arranged heterodimers, each one formed by a 21 kDa (p21) and a 12 kDa (p12) subunit. Inactive pro-form can homodimerize. Dronc and Drice can form a stable complex. Interacts with Diap2 (via BIR3 domain) to form a stable complex. May interact with some isoforms of Dark.

With respect to regulation, zymogen activated by proteolytic cleavage; cleaved by the initiator caspase Dronc upon apoptosis induction. Involved in the activation cascade of caspases responsible for apoptosis execution. Acts downstream of rpr. Cleaves baculovirus p35 and lamin DmO in vitro. The sequence is that of Caspase drICE (Drice) from Drosophila melanogaster (Fruit fly).